Here is a 419-residue protein sequence, read N- to C-terminus: S-adenosylmethionine synthase (419 aa).

His15 provides a ligand contact to ATP. Asp17 contacts Mg(2+). A K(+)-binding site is contributed by Glu43. Residues Glu56 and Gln100 each contribute to the L-methionine site. The interval 100 to 110 (QSPDIAQGVNE) is flexible loop. ATP is bound by residues 171–173 (DGK), 248–249 (KF), Asp257, 263–264 (RK), Ala280, and Lys284. Asp257 contacts L-methionine. Lys288 contacts L-methionine.

The protein belongs to the AdoMet synthase family. In terms of assembly, homotetramer; dimer of dimers. The cofactor is Mg(2+). Requires K(+) as cofactor.

The protein localises to the cytoplasm. The catalysed reaction is L-methionine + ATP + H2O = S-adenosyl-L-methionine + phosphate + diphosphate. Its pathway is amino-acid biosynthesis; S-adenosyl-L-methionine biosynthesis; S-adenosyl-L-methionine from L-methionine: step 1/1. Its function is as follows. Catalyzes the formation of S-adenosylmethionine (AdoMet) from methionine and ATP. The overall synthetic reaction is composed of two sequential steps, AdoMet formation and the subsequent tripolyphosphate hydrolysis which occurs prior to release of AdoMet from the enzyme. In Prochlorococcus marinus (strain MIT 9303), this protein is S-adenosylmethionine synthase.